The chain runs to 250 residues: Tetrathionate reductase subunit B (250 aa).

A signal peptide (tat-type signal) is located at residues 1–33 (MWTGVNMDSSKRQFLQQLGVLTAGASLVPLAEA). 4Fe-4S ferredoxin-type domains are found at residues 50-79 (YAML…PQGA), 97-128 (VTNV…QRED), and 129-158 (GIVV…INHE). [4Fe-4S] cluster-binding residues include Cys59, Cys62, Cys65, Cys69, Cys106, Cys109, Cys114, Cys118, Cys138, Cys141, Cys144, Cys148, Cys165, Cys168, Cys180, and Cys184.

As to quaternary structure, probably composed of three subunits: TtrA, TtrB and TtrC. In terms of processing, predicted to be exported by the Tat system. The position of the signal peptide cleavage has not been experimentally proven.

The protein localises to the periplasm. The protein resides in the cell inner membrane. Functionally, part of a membrane-bound tetrathionate reductase that catalyzes the reduction of tetrathionate to thiosulfate. TtrB is probably involved in transfer of electrons from TtrC to TtrA. During mice infection, the ability to use tetrathionate as an electron acceptor is a growth advantage for S.typhimurium over the competing microbiota in the lumen of the inflamed gut. The polypeptide is Tetrathionate reductase subunit B (ttrB) (Salmonella typhimurium (strain LT2 / SGSC1412 / ATCC 700720)).